The following is a 397-amino-acid chain: Acetate kinase (397 aa).

Asn7 lines the Mg(2+) pocket. Lys14 is a binding site for ATP. Position 91 (Arg91) interacts with substrate. Catalysis depends on Asp148, which acts as the Proton donor/acceptor. Residues His208–Gly212, Asp283–Arg285, and Gly331–Asn335 contribute to the ATP site. Glu383 is a Mg(2+) binding site.

This sequence belongs to the acetokinase family. As to quaternary structure, homodimer. It depends on Mg(2+) as a cofactor. Requires Mn(2+) as cofactor.

Its subcellular location is the cytoplasm. It carries out the reaction acetate + ATP = acetyl phosphate + ADP. The protein operates within metabolic intermediate biosynthesis; acetyl-CoA biosynthesis; acetyl-CoA from acetate: step 1/2. Functionally, catalyzes the formation of acetyl phosphate from acetate and ATP. Can also catalyze the reverse reaction. This Heliobacterium modesticaldum (strain ATCC 51547 / Ice1) protein is Acetate kinase.